The sequence spans 938 residues: Glutamate receptor ionotropic, NMDA 1 (938 aa).

The signal sequence occupies residues 1–18 (MSTMHLLTFALLFSCSFA). Topologically, residues 19–559 (RAACDPKIVN…TLDSFMQPFQ (541 aa)) are extracellular. N-linked (GlcNAc...) asparagine glycosylation is found at Asn61, Asn203, Asn239, Asn276, Asn300, Asn350, Asn368, Asn440, Asn471, and Asn491. A disulfide bridge links Cys79 with Cys308. Cystine bridges form between Cys420–Cys454 and Cys436–Cys455. The glycine site is built by Pro516, Thr518, and Arg523. The helical transmembrane segment at 560 to 580 (STLWLLVGLSVHVVAVMLYLL) threads the bilayer. Topologically, residues 581–602 (DRFSPFGRFKVNSEEEEEDALT) are cytoplasmic. Positions 603–624 (LSSAMWFSWGVLLNSGIGEGAP) form an intramembrane region, discontinuously helical. A pore-forming region spans residues 603-624 (LSSAMWFSWGVLLNSGIGEGAP). At 625 to 630 (RSFSAR) the chain is on the cytoplasmic side. The chain crosses the membrane as a helical span at residues 631–647 (ILGMVWAGFAMIIVASY). Over 648-812 (TANLAAFLVL…NAPATLTFEN (165 aa)) the chain is Extracellular. Asn674 is a glycosylation site (N-linked (GlcNAc...) asparagine). 2 residues coordinate glycine: Ser688 and Asp732. The cysteines at positions 744 and 798 are disulfide-linked. A glycan (N-linked (GlcNAc...) asparagine) is linked at Asn771. The helical transmembrane segment at 813–833 (MAGVFMLVAGGIVAGIFLIFI) threads the bilayer. Topologically, residues 834 to 938 (EIAYKRHKDA…LQLCSRHRES (105 aa)) are cytoplasmic. Ser889 is subject to Phosphoserine; by PKC. A disordered region spans residues 889–938 (SSFKRRRSSKDTSTGGGRGALQNQKDTVLPRRAIEREEGQLQLCSRHRES). Ser890 carries the post-translational modification Phosphoserine. Residues Ser896 and Ser897 each carry the phosphoserine; by PKC modification. Residues 916–927 (VLPRRAIEREEG) show a composition bias toward basic and acidic residues.

It belongs to the glutamate-gated ion channel (TC 1.A.10.1) family. NR1/GRIN1 subfamily. As to quaternary structure, heterotetramer; the NMDAR subunits are modular and harbor tiered domains that function in concert to regulate opening and closing of the cation-selective ion channel pore. Forms heterotetrameric channels composed of two GluN1/zeta subunits (GRIN1), and two identical GluN2/epsilon subunits (GRIN2A, GRIN2B, GRIN2C or GRIN2D) or GluN3 subunits (GRIN3A or GRIN3B) (in vitro). Can also form heterotetrameric channels that contain at least two GluN1 subunits and at least two different GluN2 subunits (or a combination of one GluN2 and one GluN3 subunits) (in vitro). In vivo, the subunit composition may vary in function of the expression levels of the different subunits. Found in a complex with GRIN2A or GRIN2B, GRIN3A and PPP2CB. Found in a complex with GRIN2A or GRIN2B and GRIN3B. Interacts with SNX27 (via PDZ domain); the interaction is required for recycling to the plasma membrane when endocytosed and prevent degradation in lysosomes. Interacts with DLG4 and MPDZ. Interacts with LRFN1 and LRFN2. Interacts with MYZAP. Found in a complex with DLG4 and PRR7. Found in a complex with GRIN2B and PRR7. Interacts with PRR7; the interaction is reduced following NMDA receptor activity. Post-translationally, NMDA is probably regulated by C-terminal phosphorylation of an isoform of GRIN1 by PKC. Dephosphorylated on Ser-897 probably by protein phosphatase 2A (PPP2CB). Its phosphorylated state is influenced by the formation of the NMDAR-PPP2CB complex and the NMDAR channel activity. In terms of tissue distribution, detected in brain (at protein level). Detected in brain.

It localises to the cell membrane. The protein localises to the postsynaptic cell membrane. Its subcellular location is the postsynaptic density membrane. The protein resides in the synaptic cell membrane. It carries out the reaction Ca(2+)(in) = Ca(2+)(out). It catalyses the reaction Na(+)(in) = Na(+)(out). The enzyme catalyses K(+)(in) = K(+)(out). In terms of biological role, component of N-methyl-D-aspartate (NMDA) receptors (NMDARs) that function as heterotetrameric, ligand-gated cation channels with high calcium permeability and voltage-dependent block by Mg(2+). NMDARs participate in synaptic plasticity for learning and memory formation by contributing to the long-term potentiation (LTP). Channel activation requires binding of the neurotransmitter L-glutamate to the GluN2 subunit, glycine or D-serine binding to the GluN1 subunit, plus membrane depolarization to eliminate channel inhibition by Mg(2+). NMDARs mediate simultaneously the potasium efflux and the influx of calcium and sodium. Each GluN2 or GluN3 subunit confers differential attributes to channel properties, including activation, deactivation and desensitization kinetics, pH sensitivity, Ca2(+) permeability, and binding to allosteric modulators. This chain is Glutamate receptor ionotropic, NMDA 1, found in Mus musculus (Mouse).